Consider the following 221-residue polypeptide: Woronin body major protein (221 aa).

The Microbody targeting signal motif lies at 219-221 (SRL).

This sequence belongs to the eIF-5A family. Hex1 subfamily. As to quaternary structure, forms oligomers. Self-assembles into hexagonal rods.

It is found in the cell septum. Major component of Woronin bodies, fungal-specific organelles that occlude septal pores in order to separate intact from damaged compartments. Hex1 binds directly or indirectly to the Woronin body tether that in turn is anchored at the rim of the septal pore. This chain is Woronin body major protein, found in Emericella nidulans (strain FGSC A4 / ATCC 38163 / CBS 112.46 / NRRL 194 / M139) (Aspergillus nidulans).